Reading from the N-terminus, the 505-residue chain is Alkylglycerol monooxygenase (505 aa).

2 helical membrane-spanning segments follow: residues 56–76 (VSAWWLVFLTAEFFILFISGH) and 104–124 (AVAIFLYVIVWDNWRILELPW). In terms of domain architecture, Fatty acid hydroxylase spans 130 to 262 (WIFCLFFQDF…FIIWDKMFNT (133 aa)). A Histidine box-1 motif is present at residues 145 to 149 (HRAVH). Residues 158–162 (HTIHH) carry the Histidine box-2 motif. The short motif at 234–238 (HRVHH) is the Histidine box-3 element. 4 helical membrane-spanning segments follow: residues 366-386 (ILVKVYVASSFLLLLAIFFHF), 396-416 (LDCTVKIAYFVVTMQCFGAFF), 430-450 (CCGVLIYYGVLMFDHIGAGTH), and 452-472 (LFVISLHIMAIALWTTDVLVE).

It belongs to the sterol desaturase family. TMEM195 subfamily. Fe cation serves as cofactor.

The protein resides in the endoplasmic reticulum membrane. It catalyses the reaction 1-O-(1,2-saturated-alkyl)-sn-glycerol + (6R)-L-erythro-5,6,7,8-tetrahydrobiopterin + O2 = a 1-(1-hydroxyalkyl)-sn-glycerol + (6R)-L-erythro-6,7-dihydrobiopterin + H2O. Glyceryl-ether monooxygenase that cleaves the O-alkyl bond of ether lipids. The protein is Alkylglycerol monooxygenase of Caenorhabditis elegans.